The chain runs to 85 residues: Beta-defensin 18 (85 aa).

The N-terminal stretch at 1–23 (MQSTMKMFGIILMVIFSVSCGPS) is a signal peptide. 3 disulfide bridges follow: C39–C65, C46–C60, and C50–C66.

The protein belongs to the beta-defensin family.

The protein resides in the secreted. Its function is as follows. Has antibacterial activity. This Mus musculus (Mouse) protein is Beta-defensin 18 (Defb18).